A 719-amino-acid polypeptide reads, in one-letter code: Fatty acid oxidation complex subunit alpha (719 aa).

Residues 1–190 (MVYQGNRITV…KLGLVDATVA (190 aa)) are enoyl-CoA hydratase/isomerase. Asp-298 contacts substrate. Residues 313-719 (HEINEAAVLG…AAGETFYATA (407 aa)) form a 3-hydroxyacyl-CoA dehydrogenase region. NAD(+)-binding positions include Met-326, Asp-345, 402-404 (VVE), Lys-409, and Ser-431. The active-site For 3-hydroxyacyl-CoA dehydrogenase activity is His-452. Asn-455 contacts NAD(+). Residue Asn-502 coordinates substrate.

The protein in the N-terminal section; belongs to the enoyl-CoA hydratase/isomerase family. In the C-terminal section; belongs to the 3-hydroxyacyl-CoA dehydrogenase family. In terms of assembly, heterotetramer of two alpha chains (FadB) and two beta chains (FadA).

The enzyme catalyses a (3S)-3-hydroxyacyl-CoA + NAD(+) = a 3-oxoacyl-CoA + NADH + H(+). The catalysed reaction is a (3S)-3-hydroxyacyl-CoA = a (2E)-enoyl-CoA + H2O. It carries out the reaction a 4-saturated-(3S)-3-hydroxyacyl-CoA = a (3E)-enoyl-CoA + H2O. It catalyses the reaction (3S)-3-hydroxybutanoyl-CoA = (3R)-3-hydroxybutanoyl-CoA. The enzyme catalyses a (3Z)-enoyl-CoA = a 4-saturated (2E)-enoyl-CoA. The catalysed reaction is a (3E)-enoyl-CoA = a 4-saturated (2E)-enoyl-CoA. Its pathway is lipid metabolism; fatty acid beta-oxidation. In terms of biological role, involved in the aerobic and anaerobic degradation of long-chain fatty acids via beta-oxidation cycle. Catalyzes the formation of 3-oxoacyl-CoA from enoyl-CoA via L-3-hydroxyacyl-CoA. It can also use D-3-hydroxyacyl-CoA and cis-3-enoyl-CoA as substrate. This is Fatty acid oxidation complex subunit alpha from Psychrobacter arcticus (strain DSM 17307 / VKM B-2377 / 273-4).